The following is a 572-amino-acid chain: Proline--tRNA ligase (572 aa).

It belongs to the class-II aminoacyl-tRNA synthetase family. ProS type 1 subfamily. Homodimer.

The protein localises to the cytoplasm. The enzyme catalyses tRNA(Pro) + L-proline + ATP = L-prolyl-tRNA(Pro) + AMP + diphosphate. Functionally, catalyzes the attachment of proline to tRNA(Pro) in a two-step reaction: proline is first activated by ATP to form Pro-AMP and then transferred to the acceptor end of tRNA(Pro). As ProRS can inadvertently accommodate and process non-cognate amino acids such as alanine and cysteine, to avoid such errors it has two additional distinct editing activities against alanine. One activity is designated as 'pretransfer' editing and involves the tRNA(Pro)-independent hydrolysis of activated Ala-AMP. The other activity is designated 'posttransfer' editing and involves deacylation of mischarged Ala-tRNA(Pro). The misacylated Cys-tRNA(Pro) is not edited by ProRS. In Haemophilus influenzae (strain PittEE), this protein is Proline--tRNA ligase.